A 542-amino-acid polypeptide reads, in one-letter code: Membrane protein insertase YidC (542 aa).

A run of 6 helical transmembrane segments spans residues 6-26 (NILLIGLLFVSFLMWQQWQTD), 326-346 (LVVDYGFLWWLAIPIHWLLMF), 350-370 (FVGNWGVAIILITLTVRGGLY), 421-441 (GGCLPILLQMPIFIALYWVLL), 458-478 (LSVQDPYYVLPLLMGLSMFLM), and 501-521 (VIFTVFFLWFPAGLVLYWLVG).

It belongs to the OXA1/ALB3/YidC family. Type 1 subfamily. In terms of assembly, interacts with the Sec translocase complex via SecD. Specifically interacts with transmembrane segments of nascent integral membrane proteins during membrane integration.

It is found in the cell inner membrane. In terms of biological role, required for the insertion and/or proper folding and/or complex formation of integral membrane proteins into the membrane. Involved in integration of membrane proteins that insert both dependently and independently of the Sec translocase complex, as well as at least some lipoproteins. Aids folding of multispanning membrane proteins. In Shewanella frigidimarina (strain NCIMB 400), this protein is Membrane protein insertase YidC.